The following is a 158-amino-acid chain: uncharacterized protein (158 aa).

2 helical membrane passes run 10-30 (LFFIFSGGLVFFFFEFFLNHF) and 40-60 (YITFYFIKNHPSLFLLFNFFL).

The protein localises to the membrane. This is an uncharacterized protein from Schizosaccharomyces pombe (strain 972 / ATCC 24843) (Fission yeast).